The sequence spans 204 residues: Transmembrane protein 186 (204 aa).

Residues 1–69 (MLELLCRVSP…RLVAALSRLK (69 aa)) are Mitochondrial matrix-facing. A helical transmembrane segment spans residues 70-90 (VYQAVITAAGTPIVFALGSAG). At 91–95 (QLSTD) the chain is on the mitochondrial intermembrane side. A helical transmembrane segment spans residues 96-116 (ALAIYAAIGVTGLITLTLASY). At 117–204 (ASSNLVGFIY…RQLFEGLFGN (88 aa)) the chain is on the mitochondrial matrix side.

The protein belongs to the TMEM186 family. As to quaternary structure, associates with mitochondrial complex I assembly intermediates during its biogenesis.

The protein resides in the mitochondrion inner membrane. As part of the MCIA complex, required for efficient assembly of the mitochondrial complex I. The polypeptide is Transmembrane protein 186 (Drosophila melanogaster (Fruit fly)).